A 480-amino-acid polypeptide reads, in one-letter code: Membrane-bound lytic murein transglycosylase F (480 aa).

The first 15 residues, 1–15 (MNRILLTLLTLTLLA), serve as a signal peptide directing secretion. The non-LT domain stretch occupies residues 16-259 (GCQRVAVEET…HLDEKYFAHV (244 aa)). Residues 260–480 (KRFDYVDTRA…EKAITGAQPE (221 aa)) are LT domain. The active site involves Glu304.

This sequence in the N-terminal section; belongs to the bacterial solute-binding protein 3 family. The protein in the C-terminal section; belongs to the transglycosylase Slt family.

The protein resides in the cell outer membrane. The enzyme catalyses Exolytic cleavage of the (1-&gt;4)-beta-glycosidic linkage between N-acetylmuramic acid (MurNAc) and N-acetylglucosamine (GlcNAc) residues in peptidoglycan, from either the reducing or the non-reducing ends of the peptidoglycan chains, with concomitant formation of a 1,6-anhydrobond in the MurNAc residue.. Its function is as follows. Murein-degrading enzyme that degrades murein glycan strands and insoluble, high-molecular weight murein sacculi, with the concomitant formation of a 1,6-anhydromuramoyl product. Lytic transglycosylases (LTs) play an integral role in the metabolism of the peptidoglycan (PG) sacculus. Their lytic action creates space within the PG sacculus to allow for its expansion as well as for the insertion of various structures such as secretion systems and flagella. In Shewanella woodyi (strain ATCC 51908 / MS32), this protein is Membrane-bound lytic murein transglycosylase F.